A 184-amino-acid chain; its full sequence is Putative pre-16S rRNA nuclease (184 aa).

The tract at residues 1–23 (MFSSQHRLLYQPSGPDLSKNLDP) is disordered.

This sequence belongs to the YqgF nuclease family.

Its subcellular location is the cytoplasm. Functionally, could be a nuclease involved in processing of the 5'-end of pre-16S rRNA. The protein is Putative pre-16S rRNA nuclease of Mycobacterium leprae (strain Br4923).